The chain runs to 680 residues: DNA-directed RNA polymerase subunit beta' (680 aa).

4 residues coordinate Zn(2+): Cys68, Cys70, Cys86, and Cys89. Mg(2+) contacts are provided by Asp488, Asp490, and Asp492.

The protein belongs to the RNA polymerase beta' chain family. RpoC1 subfamily. In terms of assembly, in plastids the minimal PEP RNA polymerase catalytic core is composed of four subunits: alpha, beta, beta', and beta''. When a (nuclear-encoded) sigma factor is associated with the core the holoenzyme is formed, which can initiate transcription. Requires Mg(2+) as cofactor. Zn(2+) serves as cofactor.

The protein localises to the plastid. The protein resides in the chloroplast. The catalysed reaction is RNA(n) + a ribonucleoside 5'-triphosphate = RNA(n+1) + diphosphate. Its function is as follows. DNA-dependent RNA polymerase catalyzes the transcription of DNA into RNA using the four ribonucleoside triphosphates as substrates. The chain is DNA-directed RNA polymerase subunit beta' from Nicotiana tabacum (Common tobacco).